A 207-amino-acid polypeptide reads, in one-letter code: Putative 3-methyladenine DNA glycosylase (207 aa).

This sequence belongs to the DNA glycosylase MPG family.

This Koribacter versatilis (strain Ellin345) protein is Putative 3-methyladenine DNA glycosylase.